Here is a 228-residue protein sequence, read N- to C-terminus: MKIAGIDEAGRGPVIGPMVIAAVVVDENSLPKLEELKVRDSKKLTPKRREKLFNEILGVLDDYVILELPPDVIGSREGTLNEFEVENFAKALNSLKVKPDVIYADAADVDEERFARELGERLNFEAEVVAKHKADDIFPVVSAASILAKVTRDRAVEKLKEEYGEIGSGYPSDPRTRAFLENYYREHGEFPPIVRKGWKTLKKIAEKVESEKKAEERQATLDRYFRKV.

Residues 1–210 (MKIAGIDEAG…LKKIAEKVES (210 aa)) enclose the RNase H type-2 domain. A divalent metal cation contacts are provided by Asp-7, Glu-8, and Asp-105.

The protein belongs to the RNase HII family. Monomer. Mn(2+) serves as cofactor. Requires Mg(2+) as cofactor.

It localises to the cytoplasm. It carries out the reaction Endonucleolytic cleavage to 5'-phosphomonoester.. Endonuclease that specifically degrades the RNA of RNA-DNA hybrids. This is Ribonuclease HII (rnhB) from Thermococcus kodakarensis (strain ATCC BAA-918 / JCM 12380 / KOD1) (Pyrococcus kodakaraensis (strain KOD1)).